The sequence spans 85 residues: SPbeta prophage-derived uncharacterized protein YoqG (85 aa).

This Bacillus subtilis (strain 168) protein is SPbeta prophage-derived uncharacterized protein YoqG (yoqG).